The chain runs to 67 residues: MAKVKMKTNRSAAKRFKVTAKGKIKRWKSGGAHYNTKKSSKRKRHLRKHTYVKDNMLKHVKALLKEF.

A disordered region spans residues 22-45; sequence GKIKRWKSGGAHYNTKKSSKRKRH. The span at 35 to 45 shows a compositional bias: basic residues; it reads NTKKSSKRKRH.

The protein belongs to the bacterial ribosomal protein bL35 family.

The chain is Large ribosomal subunit protein bL35 from Aquifex aeolicus (strain VF5).